The following is a 290-amino-acid chain: MNGKEGPGGFRKRKHDNFPHNQRREGKDASSSSPVMLAFKSFQQELDTRHDKYERLVKLSRDITVESKRTIFLLHRITSAPDMEEILTESESKLDGVRQKMLQVAQELSGEDMHQFHRAVTTGLQEYVEAVSFQHFIRTRSLISMEEINRQLTFTTDDSGKESKAPPADGQDKQLVTWRLKITPVDYLLGVADLTGELMRMCINSVGNGDIDTPFEVSQFLRQVYDGFSFIGNTGPYEVSKKLYTLKQSLSKVENACYALKVRGSEIPKHMLADVFSVKTEMIDQEESIS.

A disordered region spans residues 1–34 (MNGKEGPGGFRKRKHDNFPHNQRREGKDASSSSP). Basic and acidic residues predominate over residues 16–28 (DNFPHNQRREGKD). Residues 73 to 208 (LLHRITSAPD…MRMCINSVGN (136 aa)) form an interaction with C1D region. Glu-129 and Glu-197 together coordinate Mg(2+). Lys-279 participates in a covalent cross-link: Glycyl lysine isopeptide (Lys-Gly) (interchain with G-Cter in SUMO2).

Belongs to the translin family. In terms of assembly, ring-shaped heterooctamer of six TSN and two TSNAX subunits. Interacts with GOLGA3, TSNAXIP1, SUN1 and AKAP9. Interacts with the homodimeric form of C1D following gamma-radiation. Interacts with TSN and C1D in a mutually exclusive manner. In terms of processing, sumoylated with SUMO1. Detected in cerebellum.

The protein localises to the cytoplasm. It localises to the perinuclear region. It is found in the golgi apparatus. Its subcellular location is the nucleus. Acts in combination with TSN as an endonuclease involved in the activation of the RNA-induced silencing complex (RISC). Possible role in spermatogenesis. The chain is Translin-associated protein X (Tsnax) from Rattus norvegicus (Rat).